The sequence spans 300 residues: Transmembrane protein 158 (300 aa).

An N-terminal signal peptide occupies residues 1–20 (MLPLLAALLAAACPLPPVRG). An N-linked (GlcNAc...) asparagine glycan is attached at asparagine 75. 2 helical membrane-spanning segments follow: residues 231–251 (LVIV…IAGF) and 273–293 (VPAG…AAAV).

The protein belongs to the TMEM158 family. Post-translationally, N-glycosylated.

Its subcellular location is the membrane. Its function is as follows. Receptor for brain injury-derived neurotrophic peptide (BINP), a synthetic 13-mer peptide. This is Transmembrane protein 158 (TMEM158) from Homo sapiens (Human).